Consider the following 90-residue polypeptide: UPF0297 protein ABC1593 (90 aa).

Belongs to the UPF0297 family.

The chain is UPF0297 protein ABC1593 from Shouchella clausii (strain KSM-K16) (Alkalihalobacillus clausii).